A 562-amino-acid polypeptide reads, in one-letter code: Tissue-type plasminogen activator (562 aa).

The first 22 residues, 1–22 (MDAMKRGLCCVLLLCGAVFVSP), serve as a signal peptide directing secretion. Residues 23–32 (SQEIHARFRR) constitute a propeptide that is removed on maturation. A propeptide spans 33-35 (GAR) (removed by plasmin). One can recognise a Fibronectin type-I domain in the interval 39–81 (VICRDEKTQMIYQQHQSWLRPVLRSNRVEYCWCNSGRAQCHSV). 17 disulfide bridges follow: C41–C71, C69–C78, C86–C97, C91–C108, C110–C119, C127–C208, C148–C190, C179–C203, C215–C296, C236–C278, C267–C291, C299–C430, C342–C358, C350–C419, C444–C519, C476–C492, and C509–C537. An important for binding to annexin A2 region spans residues 42–52 (RDEKTQMIYQQ). An EGF-like domain is found at 82 to 120 (PVKSCSEPRCFNGGTCQQALYFSDFVCQCPEGFAGKCCE). An O-linked (Fuc) threonine glycan is attached at T96. 2 Kringle domains span residues 127 to 208 (CYED…TPAC) and 215 to 296 (CYFG…VPSC). N152 carries N-linked (GlcNAc...) asparagine glycosylation. Residue N219 is glycosylated (N-linked (GlcNAc...) asparagine; partial). In terms of domain architecture, Peptidase S1 spans 311 to 561 (IKGGLFADIA…YLDWIRDNMR (251 aa)). Residues H357 and D406 each act as charge relay system in the active site. An N-linked (GlcNAc...) asparagine glycan is attached at N483. Residue S513 is the Charge relay system of the active site.

It belongs to the peptidase S1 family. Heterodimer of chain A and chain B held by a disulfide bond. Forms a heterodimer with SERPINA5. Binds to fibrin with high affinity. This interaction leads to an increase in the catalytic efficiency of the enzyme between 100-fold and 1000-fold, due to an increase in affinity for plasminogen. Similarly, binding to heparin increases the activation of plasminogen. Binds to annexin A2, cytokeratin-8, fibronectin and laminin. Binds to mannose receptor and the low-density lipoprotein receptor-related protein (LRP1); these proteins are involved in TPA clearance. Yet unidentified interactions on endothelial cells and vascular smooth muscle cells (VSMC) lead to a 100-fold stimulation of plasminogen activation. In addition, binding to VSMC reduces TPA inhibition by PAI-1 by 30-fold. Binds LRP1B; binding is followed by internalization and degradation. Interacts with SERPINE1. In complex with SERPINE1, interacts with SORL1. Interacts with apyrase from Anopheles gambiae saliva; the interaction results in PLAT activation probably via an allosteric activation mechanism. The single chain, almost fully active enzyme, can be further processed into a two-chain fully active form by a cleavage after Arg-310 catalyzed by plasmin, tissue kallikrein or factor Xa. Post-translationally, differential cell-specific N-linked glycosylation gives rise to two glycoforms, type I (glycosylated at Asn-219) and type II (not glycosylated at Asn-219). The single chain type I glycoform is less readily converted into the two-chain form by plasmin, and the two-chain type I glycoform has a lower activity than the two-chain type II glycoform in the presence of fibrin. In terms of processing, N-glycosylation of Asn-152; the bound oligomannosidic glycan is involved in the interaction with the mannose receptor. Characterization of O-linked glycan was studied in Bowes melanoma cell line. Synthesized in numerous tissues (including tumors) and secreted into most extracellular body fluids, such as plasma, uterine fluid, saliva, gingival crevicular fluid, tears, seminal fluid, and milk.

Its subcellular location is the secreted. It is found in the extracellular space. It catalyses the reaction Specific cleavage of Arg-|-Val bond in plasminogen to form plasmin.. Its activity is regulated as follows. Inhibited by SERPINA5. Inhibited by SERPINE1. Functionally, converts the abundant, but inactive, zymogen plasminogen to plasmin by hydrolyzing a single Arg-Val bond in plasminogen. By controlling plasmin-mediated proteolysis, it plays an important role in tissue remodeling and degradation, in cell migration and many other physiopathological events. During oocyte activation, plays a role in cortical granule reaction in the zona reaction, which contributes to the block to polyspermy. The sequence is that of Tissue-type plasminogen activator from Homo sapiens (Human).